The chain runs to 394 residues: Aspergillopepsin-1 (394 aa).

The signal sequence occupies residues 1 to 20 (MVVFSKTAALVLGLSTAVSA). Positions 21-69 (APAPTRKGFTINQIARPANKTRTVNLPGLYARSLAKFGGTVPQSVKEAA) are cleaved as a propeptide — activation peptide. The 307-residue stretch at 85 to 391 (YLTPVTVGKS…NSEGPKLGFA (307 aa)) folds into the Peptidase A1 domain. The active site involves Asp-101. O-linked (Man...) serine glycans are attached at residues Ser-129 and Ser-304. A disulfide bridge links Cys-319 with Cys-354.

It belongs to the peptidase A1 family. As to quaternary structure, monomer.

It is found in the secreted. The catalysed reaction is Hydrolysis of proteins with broad specificity. Generally favors hydrophobic residues in P1 and P1', but also accepts Lys in P1, which leads to activation of trypsinogen. Does not clot milk.. In terms of biological role, secreted aspartic endopeptidase that allows assimilation of proteinaceous substrates. The scissile peptide bond is attacked by a nucleophilic water molecule activated by two aspartic residues in the active site. Shows a broad primary substrate specificity. Favors hydrophobic residues at the P1 and P1' positions, but also accepts a lysine residue in the P1 position, leading to the activation of trypsinogen and chymotrypsinogen A. The chain is Aspergillopepsin-1 (pepA) from Aspergillus phoenicis (Aspergillus saitoi).